We begin with the raw amino-acid sequence, 596 residues long: Zinc finger E-box-binding homeobox protein zag-1 (596 aa).

The segment at 24–46 adopts a C2H2-type 1 zinc-finger fold; that stretch reads FKCPECTKAFKFKHHLKEHIRIH. A C2H2-type 2; degenerate zinc finger spans residues 52 to 72; it reads FECQQCHKRFSHSGSYSSHMS. Positions 133–145 are enriched in polar residues; sequence LENGTSPTPTQEP. Disordered stretches follow at residues 133–225, 324–369, and 395–421; these read LENG…RPLR, NNSL…EPEW, and GFVTNQEDEEEKPIKAEESPVSSGSSS. Residues 165-179 show a composition bias toward basic and acidic residues; sequence SEVKTEVKTEVKTED. Residues 188–200 show a composition bias toward polar residues; that stretch reads PAVSMSLSPAPEQ. A compositionally biased stretch (low complexity) spans 201–216; sequence NGNESMNNGGSGSDGK. Residues 223–282 constitute a DNA-binding region (homeobox); it reads PLRSRSFLNDSQVAVLQNHFKRNPFPSKYELSAVAEQIGVNKRVVQVWFQNTRAKERRSN. The segment covering 331-355 has biased composition (basic and acidic residues); sequence QDERNNENTDEVMDHDGLKDGKETP. C2H2-type zinc fingers lie at residues 481–503 and 509–531; these read FSCDQCDKVFGKQSSLARHKYEH and YKCDICEKAFKHKHHLTEHKRLH. The C2H2-type 5; degenerate zinc finger occupies 537 to 560; that stretch reads FQCDKCLKRFSHSGSYSQHMNHRY. The disordered stretch occupies residues 569–596; the sequence is QPASPSDVLNGGSVTVSPSSSNTPPPST. The span at 578 to 590 shows a compositional bias: low complexity; the sequence is NGGSVTVSPSSSN.

Expressed in the six touch receptor neurons (TRNs) but not in the FLP and PVD neurons. Expressed in the M4 cholinergic motor neuron.

It localises to the nucleus. Transcription factor. Down-regulates expression of genes involved in either the synthesis or reuptake of serotonin, dopamine and GABA. Acts as a transcriptional repressor to regulate multiple, discrete, neuron-specific aspects of terminal differentiation, including cell migration, axonal development and gene expression. Promotes touch receptor neuron differentiation by repressing the expression of egl-44 and egl-46. As egl-44 and egl-46, probably acting as a heterodimer, repress expression of zag-1 in FLP neurons, together these proteins form a bistable, negative-feedback loop that regulates the choice between neuronal fates. Required for axon guidance. Involved in the proper development of the pharynx. Required for pharynx isthmus peristalsis, probably via a role in the differentiation of the M4 cholinergic motor neuron. Directly represses its own transcription by interacting with conserved E-box sequence motifs 5'-CACCTG-3' in its own promoter. May also act as a transcriptional activator of the homeodomain ceh-28. This Caenorhabditis elegans protein is Zinc finger E-box-binding homeobox protein zag-1.